Reading from the N-terminus, the 268-residue chain is 14-3-3-like protein GF14 iota (268 aa).

S70 and S193 each carry phosphoserine. T214 is subject to Phosphothreonine. Positions 240–268 (DLPEDGGEDNIKTEESKQEQAKPADATEN) are disordered. The segment covering 248 to 261 (DNIKTEESKQEQAK) has biased composition (basic and acidic residues).

This sequence belongs to the 14-3-3 family. As to expression, expressed in flowers.

It is found in the nucleus. It localises to the cytoplasm. Functionally, is associated with a DNA binding complex that binds to the G box, a well-characterized cis-acting DNA regulatory element found in plant genes. This is 14-3-3-like protein GF14 iota from Arabidopsis thaliana (Mouse-ear cress).